The primary structure comprises 197 residues: uncharacterized protein (197 aa).

Positions 168–185 are enriched in basic and acidic residues; it reads QRDDFSEDSHANDPKLVG. The interval 168–197 is disordered; sequence QRDDFSEDSHANDPKLVGDDYVPQAPEQIN.

This is an uncharacterized protein from Escherichia coli (strain K12).